A 423-amino-acid chain; its full sequence is 26S proteasome regulatory subunit 6A homolog B (423 aa).

The residue at position 18 (Ser18) is a Phosphoserine. Residue 211–218 (GPPGTGKT) participates in ATP binding. Glycyl lysine isopeptide (Lys-Gly) (interchain with G-Cter in ubiquitin) cross-links involve residues Lys234, Lys278, and Lys415.

This sequence belongs to the AAA ATPase family. In terms of assembly, component of the 19S regulatory particle (RP/PA700) base subcomplex of the 26S proteasome. The 26S proteasome is composed of a core protease (CP), known as the 20S proteasome, capped at one or both ends by the 19S regulatory particle (RP/PA700). The RP/PA700 complex is composed of at least 17 different subunits in two subcomplexes, the base and the lid, which form the portions proximal and distal to the 20S proteolytic core, respectively.

The protein resides in the cytoplasm. Its subcellular location is the nucleus. Its function is as follows. The 26S proteasome is involved in the ATP-dependent degradation of ubiquitinated proteins. The regulatory (or ATPase) complex confers ATP dependency and substrate specificity to the 26S complex. In Arabidopsis thaliana (Mouse-ear cress), this protein is 26S proteasome regulatory subunit 6A homolog B (RPT5B).